Here is a 252-residue protein sequence, read N- to C-terminus: Putative cytosolic acyl coenzyme A thioester hydrolase-like (252 aa).

2 consecutive HotDog ACOT-type domains span residues 1–90 (MIKE…LSLT) and 146–252 (SYSQ…SVFT).

As to quaternary structure, homodimer. As to expression, expressed in all tissues examined. Up-regulated in nasopharyngeal carcinoma (at protein level).

It is found in the cytoplasm. It carries out the reaction hexadecanoyl-CoA + H2O = hexadecanoate + CoA + H(+). Functionally, acyl-CoA thioesterases are a group of enzymes that catalyze the hydrolysis of acyl-CoAs to the free fatty acid and coenzyme A (CoASH), providing the potential to regulate intracellular levels of acyl-CoAs, free fatty acids and CoASH. This Homo sapiens (Human) protein is Putative cytosolic acyl coenzyme A thioester hydrolase-like (ACOT7L).